The chain runs to 180 residues: Large ribosomal subunit protein uL6 (180 aa).

It belongs to the universal ribosomal protein uL6 family. In terms of assembly, part of the 50S ribosomal subunit.

This protein binds to the 23S rRNA, and is important in its secondary structure. It is located near the subunit interface in the base of the L7/L12 stalk, and near the tRNA binding site of the peptidyltransferase center. The chain is Large ribosomal subunit protein uL6 from Borrelia duttonii (strain Ly).